Consider the following 275-residue polypeptide: Phosphate import ATP-binding protein PstB 1 (275 aa).

In terms of domain architecture, ABC transporter spans 22 to 261; sequence FNVEGVKVYY…SPTEQMFNSP (240 aa). An ATP-binding site is contributed by 54 to 61; sequence GPSGCGKS.

The protein belongs to the ABC transporter superfamily. Phosphate importer (TC 3.A.1.7) family. As to quaternary structure, the complex is composed of two ATP-binding proteins (PstB), two transmembrane proteins (PstC and PstA) and a solute-binding protein (PstS).

Its subcellular location is the cell inner membrane. It catalyses the reaction phosphate(out) + ATP + H2O = ADP + 2 phosphate(in) + H(+). Its function is as follows. Part of the ABC transporter complex PstSACB involved in phosphate import. Responsible for energy coupling to the transport system. This is Phosphate import ATP-binding protein PstB 1 from Trichormus variabilis (strain ATCC 29413 / PCC 7937) (Anabaena variabilis).